We begin with the raw amino-acid sequence, 336 residues long: Small ribosomal subunit protein uS2 (336 aa).

This sequence belongs to the universal ribosomal protein uS2 family.

The polypeptide is Small ribosomal subunit protein uS2 (Beijerinckia indica subsp. indica (strain ATCC 9039 / DSM 1715 / NCIMB 8712)).